The sequence spans 317 residues: Retinol dehydrogenase 16 (317 aa).

An NAD(+)-binding site is contributed by Phe-33 to Leu-57. Ser-164 provides a ligand contact to substrate. Tyr-176 acts as the Proton acceptor in catalysis. Residues Phe-289–Trp-308 form a helical membrane-spanning segment.

The protein belongs to the short-chain dehydrogenases/reductases (SDR) family. Homodimer. Post-translationally, not N-glycosylated. As to expression, liver &gt; kidney &gt; brain &gt; lung &gt; testis.

The protein localises to the microsome membrane. It localises to the endoplasmic reticulum membrane. It carries out the reaction all-trans-retinol--[retinol-binding protein] + NAD(+) = all-trans-retinal--[retinol-binding protein] + NADH + H(+). The catalysed reaction is all-trans-retinol + NAD(+) = all-trans-retinal + NADH + H(+). It catalyses the reaction 13-cis-retinol + NAD(+) = 13-cis-retinal + NADH + H(+). The enzyme catalyses 11-cis-retinol + NAD(+) = 11-cis-retinal + NADH + H(+). It carries out the reaction 9-cis-retinol + NAD(+) = 9-cis-retinal + NADH + H(+). The catalysed reaction is 5alpha-androstane-3alpha,17beta-diol + NAD(+) = 17beta-hydroxy-5alpha-androstan-3-one + NADH + H(+). It catalyses the reaction androsterone + NAD(+) = 5alpha-androstan-3,17-dione + NADH + H(+). It participates in cofactor metabolism; retinol metabolism. Oxidoreductase with a preference for NAD. Oxidizes all-trans-retinol, 9-cis-retinol, 11-cis-retinol and 13-cis-retinol to the corresponding aldehydes. Has higher activity towards CRBP-bound retinol than with free retinol. Oxidizes 3-alpha-hydroxysteroids. Oxidizes androstanediol and androsterone to dihydrotestosterone and androstanedione. Can also catalyze the reverse reaction. This chain is Retinol dehydrogenase 16, found in Rattus norvegicus (Rat).